A 187-amino-acid chain; its full sequence is Peptidyl-tRNA hydrolase (187 aa).

Position 14 (histidine 14) interacts with tRNA. Histidine 19 functions as the Proton acceptor in the catalytic mechanism. TRNA is bound by residues tyrosine 62, asparagine 64, and asparagine 110.

Belongs to the PTH family. As to quaternary structure, monomer.

It localises to the cytoplasm. It carries out the reaction an N-acyl-L-alpha-aminoacyl-tRNA + H2O = an N-acyl-L-amino acid + a tRNA + H(+). Its function is as follows. Hydrolyzes ribosome-free peptidyl-tRNAs (with 1 or more amino acids incorporated), which drop off the ribosome during protein synthesis, or as a result of ribosome stalling. Functionally, catalyzes the release of premature peptidyl moieties from peptidyl-tRNA molecules trapped in stalled 50S ribosomal subunits, and thus maintains levels of free tRNAs and 50S ribosomes. The chain is Peptidyl-tRNA hydrolase from Chlorobaculum tepidum (strain ATCC 49652 / DSM 12025 / NBRC 103806 / TLS) (Chlorobium tepidum).